Reading from the N-terminus, the 207-residue chain is Superoxide dismutase [Mn] (207 aa).

Residues H28, H76, D160, and H164 each contribute to the Mn(2+) site.

Belongs to the iron/manganese superoxide dismutase family. It depends on Mn(2+) as a cofactor.

The catalysed reaction is 2 superoxide + 2 H(+) = H2O2 + O2. In terms of biological role, destroys superoxide anion radicals which are normally produced within the cells and which are toxic to biological systems. This Mycobacterium leprae (strain TN) protein is Superoxide dismutase [Mn] (sodA).